Consider the following 585-residue polypeptide: Protein DENND6B (585 aa).

Residues 1-10 are compositionally biased toward low complexity; the sequence is MEVPVGPGPR. Positions 1–25 are disordered; it reads MEVPVGPGPRQAGGGLGATRSSSSG. The 179-residue stretch at 43 to 221 folds into the uDENN domain; that stretch reads ECVCVVTFDL…IQVRIPSRVD (179 aa). A cDENN domain is found at 246–373; it reads VHELDLFRCF…VKLKKPSRLK (128 aa). Residues 375–499 enclose the dDENN domain; sequence LDTKPGLYTS…KSPHFDGWYR (125 aa).

The protein belongs to the DENND6 family.

The protein resides in the recycling endosome. Its subcellular location is the cytoplasm. Guanine nucleotide exchange factor (GEF) for RAB14. Also has some, lesser GEF activity towards RAB35. The sequence is that of Protein DENND6B (Dennd6b) from Mus musculus (Mouse).